The chain runs to 315 residues: Prephenate dehydratase (315 aa).

The 187-residue stretch at 3–189 folds into the Prephenate dehydratase domain; it reads RIAYLGPEGT…ARTRFVLVGP (187 aa). Residues 203 to 280 enclose the ACT domain; sequence SVVLRIDNAP…ADVRYLGSWP (78 aa).

As to quaternary structure, homodimer.

The catalysed reaction is prephenate + H(+) = 3-phenylpyruvate + CO2 + H2O. Its pathway is amino-acid biosynthesis; L-phenylalanine biosynthesis; phenylpyruvate from prephenate: step 1/1. This chain is Prephenate dehydratase (pheA), found in Mycobacterium avium (strain 104).